The sequence spans 212 residues: Probable nicotinate-nucleotide adenylyltransferase (212 aa).

Belongs to the NadD family.

The enzyme catalyses nicotinate beta-D-ribonucleotide + ATP + H(+) = deamido-NAD(+) + diphosphate. Its pathway is cofactor biosynthesis; NAD(+) biosynthesis; deamido-NAD(+) from nicotinate D-ribonucleotide: step 1/1. Catalyzes the reversible adenylation of nicotinate mononucleotide (NaMN) to nicotinic acid adenine dinucleotide (NaAD). The chain is Probable nicotinate-nucleotide adenylyltransferase from Mycobacterium avium (strain 104).